The sequence spans 169 residues: MVKNIVLVGFMAVGKTTLGKLLADQLDYNFIDLDLFIEKKESMSISEIFRLKGEAYFRQKESEALDLLSDVEQSVIATGGGTVISEENRSKLKQIGRVIYLEAEPSWILTNIKRSAVIRPLLVDERKSMDKIIEILENRRLYYEGTSEIKIPVSHRTLEEIIKDIVCNI.

12 to 17 (AVGKTT) contacts ATP. Position 16 (T16) interacts with Mg(2+). 3 residues coordinate substrate: D34, R58, and G80. R119 provides a ligand contact to ATP. R139 contacts substrate. Residue R156 coordinates ATP.

The protein belongs to the shikimate kinase family. As to quaternary structure, monomer. Requires Mg(2+) as cofactor.

It localises to the cytoplasm. It carries out the reaction shikimate + ATP = 3-phosphoshikimate + ADP + H(+). The protein operates within metabolic intermediate biosynthesis; chorismate biosynthesis; chorismate from D-erythrose 4-phosphate and phosphoenolpyruvate: step 5/7. Functionally, catalyzes the specific phosphorylation of the 3-hydroxyl group of shikimic acid using ATP as a cosubstrate. This chain is Shikimate kinase, found in Alkaliphilus oremlandii (strain OhILAs) (Clostridium oremlandii (strain OhILAs)).